We begin with the raw amino-acid sequence, 29 residues long: ShK homolog Ask132958 (29 aa).

The region spanning 1 to 29 (CENTISGCSRADCLLTHRKQGCQKTCGLC) is the ShKT domain. Intrachain disulfides connect Cys1–Cys29, Cys8–Cys22, and Cys13–Cys26.

This sequence belongs to the sea anemone type 1 potassium channel toxin family. Type 1a subfamily.

Its subcellular location is the secreted. It localises to the nematocyst. This peptide is similar to the potassium channel toxin ShK, but does not show activity on potassium channels. It appears that Lys-19, which is expected to occupy the pore of the channel, is not sufficiently accessible for binding, and therefore that this peptide must have a distinct functional role that does not involve potassium channels. It is noteworthy that this peptide is much more stable in the presence of trypsin, chymotrypsin and pepsin than the toxin ShK. The sequence is that of ShK homolog Ask132958 from Anemonia sulcata (Mediterranean snakelocks sea anemone).